The sequence spans 159 residues: Large ribosomal subunit protein uL15 (159 aa).

Over residues 21–34 the composition is skewed to basic residues; sequence LRPAPGAHKSKIRV. A disordered region spans residues 21–55; sequence LRPAPGAHKSKIRVGRGEGSKGKTAGRGTKGSKAR.

Belongs to the universal ribosomal protein uL15 family. In terms of assembly, part of the 50S ribosomal subunit.

Functionally, binds to the 23S rRNA. The protein is Large ribosomal subunit protein uL15 of Frankia casuarinae (strain DSM 45818 / CECT 9043 / HFP020203 / CcI3).